The sequence spans 193 residues: dTTP/UTP pyrophosphatase (193 aa).

Residue Asp70 is the Proton acceptor of the active site.

The protein belongs to the Maf family. YhdE subfamily. A divalent metal cation is required as a cofactor.

Its subcellular location is the cytoplasm. The enzyme catalyses dTTP + H2O = dTMP + diphosphate + H(+). The catalysed reaction is UTP + H2O = UMP + diphosphate + H(+). In terms of biological role, nucleoside triphosphate pyrophosphatase that hydrolyzes dTTP and UTP. May have a dual role in cell division arrest and in preventing the incorporation of modified nucleotides into cellular nucleic acids. This Ruminiclostridium cellulolyticum (strain ATCC 35319 / DSM 5812 / JCM 6584 / H10) (Clostridium cellulolyticum) protein is dTTP/UTP pyrophosphatase.